The following is a 516-amino-acid chain: Maturase K (516 aa).

The protein belongs to the intron maturase 2 family. MatK subfamily.

Its subcellular location is the plastid. The protein resides in the chloroplast. In terms of biological role, usually encoded in the trnK tRNA gene intron. Probably assists in splicing its own and other chloroplast group II introns. This is Maturase K from Chara globularis (Fragile stonewort).